The sequence spans 183 residues: NADH-ubiquinone oxidoreductase chain 5 (183 aa).

4 consecutive transmembrane segments (helical) span residues 7 to 27, 30 to 50, 111 to 131, and 144 to 164; these read FMCYLSILTFFMPMLVTGDNS, LFLGWEGVGLASYLLIHFWFT, AITLICILLLIGAVGKSAQIG, and TPVSALIHAATMVTAGVFMIA.

The protein belongs to the complex I subunit 5 family.

Its subcellular location is the mitochondrion inner membrane. It catalyses the reaction a ubiquinone + NADH + 5 H(+)(in) = a ubiquinol + NAD(+) + 4 H(+)(out). Functionally, core subunit of the mitochondrial membrane respiratory chain NADH dehydrogenase (Complex I) that is believed to belong to the minimal assembly required for catalysis. Complex I functions in the transfer of electrons from NADH to the respiratory chain. The immediate electron acceptor for the enzyme is believed to be ubiquinone. This is NADH-ubiquinone oxidoreductase chain 5 (NDH5) from Pisum sativum (Garden pea).